A 144-amino-acid chain; its full sequence is MNKVVLIGRLTKDPELKFTPGTGTAVASFTLAVDRRFKKEGQQEADFIPIVVWGKQAESTANYMSKGKLMGVSGRIQTRSYDAKDGTRRYVTEIVAEEVQFLEWGSSNNNSMANDQFNNGNENGSMQLPDNNDITPIDDGDIPF.

One can recognise an SSB domain in the interval 1 to 103 (MNKVVLIGRL…IVAEEVQFLE (103 aa)). Over residues 112–134 (MANDQFNNGNENGSMQLPDNNDI) the composition is skewed to polar residues. The tract at residues 112-144 (MANDQFNNGNENGSMQLPDNNDITPIDDGDIPF) is disordered.

As to quaternary structure, homotetramer.

This Clostridium acetobutylicum (strain ATCC 824 / DSM 792 / JCM 1419 / IAM 19013 / LMG 5710 / NBRC 13948 / NRRL B-527 / VKM B-1787 / 2291 / W) protein is Single-stranded DNA-binding protein 3 (ssb3).